The primary structure comprises 142 residues: Struthiocalcin-2 (142 aa).

Disulfide bonds link Cys-6/Cys-17, Cys-34/Cys-138, and Cys-113/Cys-130. The C-type lectin domain occupies 13 to 139 (FDGRCYGFFP…CSDRKPFICE (127 aa)). 3 positions are modified to phosphoserine: Ser-62, Ser-66, and Ser-68.

Its subcellular location is the secreted. It is found in the extracellular space. It localises to the extracellular matrix. The protein is Struthiocalcin-2 of Struthio camelus (Common ostrich).